The primary structure comprises 74 residues: Cytochrome c oxidase subunit 6C (74 aa).

Topologically, residues 2-12 are mitochondrial matrix; that stretch reads STALAKPQMRG. A helical membrane pass occupies residues 13–53; sequence LLARRLRFHIVGAFMVSLGFATFYKFAVAEKRKKAYADFYR. The Mitochondrial intermembrane segment spans residues 54-74; sequence NYDSMKDFEEMRKAGIFQSAK.

Belongs to the cytochrome c oxidase subunit 6c family. As to quaternary structure, component of the cytochrome c oxidase (complex IV, CIV), a multisubunit enzyme composed of 14 subunits. The complex is composed of a catalytic core of 3 subunits MT-CO1, MT-CO2 and MT-CO3, encoded in the mitochondrial DNA, and 11 supernumerary subunits COX4I1 (or COX4I2), COX5A, COX5B, COX6A2 (or COX6A1), COX6B1 (or COX6B2), COX6C, COX7A1 (or COX7A2), COX7B, COX7C, COX8B and NDUFA4, which are encoded in the nuclear genome. The complex exists as a monomer or a dimer and forms supercomplexes (SCs) in the inner mitochondrial membrane with NADH-ubiquinone oxidoreductase (complex I, CI) and ubiquinol-cytochrome c oxidoreductase (cytochrome b-c1 complex, complex III, CIII), resulting in different assemblies (supercomplex SCI(1)III(2)IV(1) and megacomplex MCI(2)III(2)IV(2)).

Its subcellular location is the mitochondrion inner membrane. It participates in energy metabolism; oxidative phosphorylation. Component of the cytochrome c oxidase, the last enzyme in the mitochondrial electron transport chain which drives oxidative phosphorylation. The respiratory chain contains 3 multisubunit complexes succinate dehydrogenase (complex II, CII), ubiquinol-cytochrome c oxidoreductase (cytochrome b-c1 complex, complex III, CIII) and cytochrome c oxidase (complex IV, CIV), that cooperate to transfer electrons derived from NADH and succinate to molecular oxygen, creating an electrochemical gradient over the inner membrane that drives transmembrane transport and the ATP synthase. Cytochrome c oxidase is the component of the respiratory chain that catalyzes the reduction of oxygen to water. Electrons originating from reduced cytochrome c in the intermembrane space (IMS) are transferred via the dinuclear copper A center (CU(A)) of subunit 2 and heme A of subunit 1 to the active site in subunit 1, a binuclear center (BNC) formed by heme A3 and copper B (CU(B)). The BNC reduces molecular oxygen to 2 water molecules using 4 electrons from cytochrome c in the IMS and 4 protons from the mitochondrial matrix. The protein is Cytochrome c oxidase subunit 6C (COX6C) of Bos taurus (Bovine).